The chain runs to 335 residues: Syntaxin-18 (335 aa).

The Cytoplasmic portion of the chain corresponds to 1 to 309 (MAVDITLLFR…EDIREAIKNN (309 aa)). The segment covering 168-208 (KLEPEPNTKTRESTSSEKVSRSPSKDSEENPATEERPEKIL) has biased composition (basic and acidic residues). Positions 168-226 (KLEPEPNTKTRESTSSEKVSRSPSKDSEENPATEERPEKILAETQPELGTWGDGKGEDE) are disordered. The region spanning 243-305 (IGEMNSLFDE…KEGNEDIREA (63 aa)) is the t-SNARE coiled-coil homology domain. Residues 310–330 (AGFRVWILFFLVMCSFSLLFL) form a helical; Anchor for type IV membrane protein membrane-spanning segment. Topologically, residues 331 to 335 (DWYDS) are vesicular.

Belongs to the syntaxin family. Component of a SNARE complex consisting of STX18, USE1L, BNIP1/SEC20L, and SEC22B. RINT1/TIP20L and ZW10 are associated with the complex through interaction with BNIP1/SEC20L. Interacts directly with USE1L and BNIP1/SEC20L.

Its subcellular location is the endoplasmic reticulum membrane. It localises to the golgi apparatus membrane. In terms of biological role, syntaxin that may be involved in targeting and fusion of Golgi-derived retrograde transport vesicles with the ER. In Pongo abelii (Sumatran orangutan), this protein is Syntaxin-18 (STX18).